The primary structure comprises 325 residues: Deoxyhypusine hydroxylase (325 aa).

Ser2 carries the N-acetylserine modification. HEAT-like PBS-type repeat units lie at residues Leu77 to Asp103 and Val110 to Glu136. The Fe cation site is built by His79, Glu80, His112, and Glu113. Ser126 bears the Phosphoserine mark. At Thr187 the chain carries Phosphothreonine. 3 HEAT-like PBS-type repeats span residues Leu202–Glu231, Phe235–Arg261, and Val268–Asp294. Residues His237, Glu238, His270, and Glu271 each coordinate Fe cation. Ser281 bears the Phosphoserine mark.

The protein belongs to the deoxyhypusine hydroxylase family. It depends on Fe(2+) as a cofactor.

Its subcellular location is the cytoplasm. The protein resides in the nucleus. The catalysed reaction is [eIF5A protein]-deoxyhypusine + AH2 + O2 = [eIF5A protein]-hypusine + A + H2O. The protein operates within protein modification; eIF5A hypusination. Its function is as follows. Catalyzes the hydroxylation of the N(6)-(4-aminobutyl)-L-lysine intermediate to form hypusine, an essential post-translational modification only found in mature eIF-5A factor. This chain is Deoxyhypusine hydroxylase, found in Saccharomyces cerevisiae (strain ATCC 204508 / S288c) (Baker's yeast).